A 142-amino-acid chain; its full sequence is Maximins y/Hw (142 aa).

The signal sequence occupies residues 1–18 (MIFKYIVAVSFLIASGYA). A propeptide spanning residues 19–43 (RSVKNDEQSLSQREVLEEESLREIR) is cleaved from the precursor. Phe68 is subject to Phenylalanine amide. Positions 72–121 (TAEDHEVMKRLEAVIRDLDSLDHSEEASERETRGFNQEEIANLFTKKEKR) are excised as a propeptide. Ile141 bears the Isoleucine amide mark.

The protein belongs to the bombinin family. Expressed by the skin glands.

The protein localises to the secreted. Its function is as follows. Maximin-y shows antimicrobial activity against bacteria and against the fungus C.albicans. It has little hemolytic activity. Functionally, maximin-Hw shows antimicrobial activity against bacteria and against the fungus C.albicans. Shows strong hemolytic activity. The sequence is that of Maximins y/Hw from Bombina maxima (Giant fire-bellied toad).